A 241-amino-acid chain; its full sequence is Small ribosomal subunit protein bS6 (241 aa).

The span at 97 to 108 shows a compositional bias: basic residues; the sequence is KPKIRERNRKYT. Disordered stretches follow at residues 97–187 and 199–241; these read KPKI…HREN and NKNH…QSSN. Basic and acidic residues predominate over residues 109-118; the sequence is PRRDRFDKPN. Low complexity-rich tracts occupy residues 130–151, 161–180, and 199–210; these read QDQQATKNQQNFQQNQQNQTSQ, DDFQQVSSNQQNFRQNQQNQ, and NKNHQNQTSQTQ.

The protein belongs to the bacterial ribosomal protein bS6 family.

Binds together with bS18 to 16S ribosomal RNA. The sequence is that of Small ribosomal subunit protein bS6 from Mesomycoplasma hyopneumoniae (strain 7448) (Mycoplasma hyopneumoniae).